The following is a 373-amino-acid chain: Dual-specificity RNA methyltransferase RlmN (373 aa).

Residue E94 is the Proton acceptor of the active site. Residues 100 to 339 (EDDRATLCVS…VTIRKTRGDD (240 aa)) form the Radical SAM core domain. C107 and C344 are joined by a disulfide. The [4Fe-4S] cluster site is built by C114, C118, and C121. S-adenosyl-L-methionine-binding positions include 168 to 169 (GE), S200, 222 to 224 (SLH), and N301. C344 (S-methylcysteine intermediate) is an active-site residue.

Belongs to the radical SAM superfamily. RlmN family. [4Fe-4S] cluster serves as cofactor.

It is found in the cytoplasm. It catalyses the reaction adenosine(2503) in 23S rRNA + 2 reduced [2Fe-2S]-[ferredoxin] + 2 S-adenosyl-L-methionine = 2-methyladenosine(2503) in 23S rRNA + 5'-deoxyadenosine + L-methionine + 2 oxidized [2Fe-2S]-[ferredoxin] + S-adenosyl-L-homocysteine. It carries out the reaction adenosine(37) in tRNA + 2 reduced [2Fe-2S]-[ferredoxin] + 2 S-adenosyl-L-methionine = 2-methyladenosine(37) in tRNA + 5'-deoxyadenosine + L-methionine + 2 oxidized [2Fe-2S]-[ferredoxin] + S-adenosyl-L-homocysteine. Specifically methylates position 2 of adenine 2503 in 23S rRNA and position 2 of adenine 37 in tRNAs. m2A2503 modification seems to play a crucial role in the proofreading step occurring at the peptidyl transferase center and thus would serve to optimize ribosomal fidelity. This is Dual-specificity RNA methyltransferase RlmN from Vibrio cholerae serotype O1 (strain M66-2).